We begin with the raw amino-acid sequence, 183 residues long: Potassium-transporting ATPase KdpC subunit (183 aa).

A helical membrane pass occupies residues Leu11 to Ala31.

Belongs to the KdpC family. The system is composed of three essential subunits: KdpA, KdpB and KdpC.

It localises to the cell inner membrane. In terms of biological role, part of the high-affinity ATP-driven potassium transport (or Kdp) system, which catalyzes the hydrolysis of ATP coupled with the electrogenic transport of potassium into the cytoplasm. This subunit acts as a catalytic chaperone that increases the ATP-binding affinity of the ATP-hydrolyzing subunit KdpB by the formation of a transient KdpB/KdpC/ATP ternary complex. This Pseudomonas putida (strain W619) protein is Potassium-transporting ATPase KdpC subunit.